Reading from the N-terminus, the 430-residue chain is Lipoyl synthase, mitochondrial (430 aa).

The transit peptide at 1–37 (MAASTGKLRTLFSAHSSLSARPSSALPALRLTILRSY) directs the protein to the mitochondrion. Low complexity predominate over residues 40-56 (TTPPDSSISDPSNSSTT). The interval 40 to 63 (TTPPDSSISDPSNSSTTVKRPPTA) is disordered. Cysteine 141, cysteine 146, cysteine 152, cysteine 172, cysteine 176, cysteine 179, and serine 387 together coordinate [4Fe-4S] cluster. Residues 155–376 (GSSKSAATAT…KERALEMGFL (222 aa)) enclose the Radical SAM core domain.

The protein belongs to the radical SAM superfamily. Lipoyl synthase family. Requires [4Fe-4S] cluster as cofactor.

It is found in the mitochondrion. The catalysed reaction is [[Fe-S] cluster scaffold protein carrying a second [4Fe-4S](2+) cluster] + N(6)-octanoyl-L-lysyl-[protein] + 2 oxidized [2Fe-2S]-[ferredoxin] + 2 S-adenosyl-L-methionine + 4 H(+) = [[Fe-S] cluster scaffold protein] + N(6)-[(R)-dihydrolipoyl]-L-lysyl-[protein] + 4 Fe(3+) + 2 hydrogen sulfide + 2 5'-deoxyadenosine + 2 L-methionine + 2 reduced [2Fe-2S]-[ferredoxin]. The protein operates within protein modification; protein lipoylation via endogenous pathway; protein N(6)-(lipoyl)lysine from octanoyl-[acyl-carrier-protein]: step 2/2. Functionally, catalyzes the radical-mediated insertion of two sulfur atoms into the C-6 and C-8 positions of the octanoyl moiety bound to the lipoyl domains of lipoate-dependent enzymes, thereby converting the octanoylated domains into lipoylated derivatives. The chain is Lipoyl synthase, mitochondrial from Ajellomyces dermatitidis (strain ER-3 / ATCC MYA-2586) (Blastomyces dermatitidis).